Consider the following 333-residue polypeptide: Fructose-1,6-bisphosphatase class 1 (333 aa).

Mg(2+) contacts are provided by Glu92, Asp114, Leu116, and Asp117. Substrate contacts are provided by residues Asp117–Ser120 and Asn209. Mg(2+) is bound at residue Glu279.

Belongs to the FBPase class 1 family. In terms of assembly, homotetramer. It depends on Mg(2+) as a cofactor.

The protein localises to the cytoplasm. The catalysed reaction is beta-D-fructose 1,6-bisphosphate + H2O = beta-D-fructose 6-phosphate + phosphate. Its pathway is carbohydrate biosynthesis; gluconeogenesis. This chain is Fructose-1,6-bisphosphatase class 1, found in Alkalilimnicola ehrlichii (strain ATCC BAA-1101 / DSM 17681 / MLHE-1).